We begin with the raw amino-acid sequence, 169 residues long: MVPVARASLFTLACLLVSVCAQNFPGPPPGAVLRGPFPPARPSLTNRVHPPTSAAGMQLMRRMAVSEAVLSSDYTKRMTALDAIQNIPCVFRNPVLKYLLMDYMDMKPLPLPGSVQSQMSPATQSMILTDRGRRLQAGKLLNSRCVQSHDRLGALMYDIAEVPMAASAL.

The first 21 residues, 1 to 21 (MVPVARASLFTLACLLVSVCA), serve as a signal peptide directing secretion.

Component of the acid-soluble and acid-insoluble organic matrix of calcified shell layers (at protein level).

It localises to the secreted. This is an uncharacterized protein from Haliotis asinina (Donkey's ear abalone).